A 258-amino-acid chain; its full sequence is Deoxyribose-phosphate aldolase (258 aa).

Asp101 serves as the catalytic Proton donor/acceptor. Lys166 (schiff-base intermediate with acetaldehyde) is an active-site residue. Residue Lys200 is the Proton donor/acceptor of the active site.

The protein belongs to the DeoC/FbaB aldolase family. DeoC type 2 subfamily.

It localises to the cytoplasm. It carries out the reaction 2-deoxy-D-ribose 5-phosphate = D-glyceraldehyde 3-phosphate + acetaldehyde. Its pathway is carbohydrate degradation; 2-deoxy-D-ribose 1-phosphate degradation; D-glyceraldehyde 3-phosphate and acetaldehyde from 2-deoxy-alpha-D-ribose 1-phosphate: step 2/2. Its function is as follows. Catalyzes a reversible aldol reaction between acetaldehyde and D-glyceraldehyde 3-phosphate to generate 2-deoxy-D-ribose 5-phosphate. This is Deoxyribose-phosphate aldolase from Actinobacillus pleuropneumoniae serotype 5b (strain L20).